A 37-amino-acid chain; its full sequence is Large ribosomal subunit protein bL36 (37 aa).

This sequence belongs to the bacterial ribosomal protein bL36 family.

The chain is Large ribosomal subunit protein bL36 from Listeria innocua serovar 6a (strain ATCC BAA-680 / CLIP 11262).